A 197-amino-acid polypeptide reads, in one-letter code: Adenylate kinase isoenzyme 6 homolog FAP7 (197 aa).

5 residues coordinate ATP: Gly-17, Gly-19, Lys-20, Ser-21, and Ser-22. An NMPbind region spans residues 38–61; it reads NISDFAKDNDCFEGYDEGRKSHIV. An LID region spans residues 113-123; that stretch reads ARGYHDSKIEE. ATP is bound at residue Arg-114. A disordered region spans residues 176 to 197; the sequence is PDGVTNEYQGPRSDDEDDEDSE. Tyr-183 carries the post-translational modification Phosphotyrosine. 2 positions are modified to phosphoserine: Ser-188 and Ser-196.

Belongs to the adenylate kinase family. AK6 subfamily. Interacts with small ribosomal subunit protein uS11B/RPS14B. Not a structural component of 43S pre-ribosomes, but transiently interacts with them by binding to uS11/RPS14.

The protein resides in the cytoplasm. The protein localises to the nucleus. It catalyses the reaction AMP + ATP = 2 ADP. It carries out the reaction ATP + H2O = ADP + phosphate + H(+). In terms of biological role, broad-specificity nucleoside monophosphate (NMP) kinase that catalyzes the reversible transfer of the terminal phosphate group between nucleoside triphosphates and monophosphates. Also has ATPase activity. Involved in the late cytoplasmic maturation steps of the 40S ribosomal particles, specifically 18S rRNA maturation. Required for cleavage of the 20S pre-rRNA at site D in the cytoplasm. While NMP activity is not required for ribosome maturation, ATPase activity is. Associates transiently with small ribosomal subunit protein uS11. ATP hydrolysis breaks the interaction with uS11. May temporarily remove uS11 from the ribosome to enable a conformational change of the ribosomal RNA that is needed for the final maturation step of the small ribosomal subunit. Promotes formation of the rotated state in 80S-like ribosomes, a key intermediate in translocation, thereby releasing the essential assembly factor DIM1 from pre-40S subunits. Its NMP activity may have a role in nuclear energy homeostasis. Involved in oxidative stress response. Required for POS9-dependent target gene transcription upon oxidative stress. The sequence is that of Adenylate kinase isoenzyme 6 homolog FAP7 from Saccharomyces cerevisiae (strain ATCC 204508 / S288c) (Baker's yeast).